Consider the following 180-residue polypeptide: Adenosine 5'-phosphosulfate reductase (180 aa).

[4Fe-4S] cluster contacts are provided by cysteine 57, cysteine 58, cysteine 140, and cysteine 143. Catalysis depends on cysteine 168, which acts as the Nucleophile; cysteine thiosulfonate intermediate.

Belongs to the PAPS reductase family. CysH subfamily. Requires [4Fe-4S] cluster as cofactor.

The protein resides in the cytoplasm. It catalyses the reaction [thioredoxin]-disulfide + sulfite + AMP + 2 H(+) = adenosine 5'-phosphosulfate + [thioredoxin]-dithiol. Its pathway is sulfur metabolism; hydrogen sulfide biosynthesis; sulfite from sulfate. In terms of biological role, catalyzes the formation of sulfite from adenosine 5'-phosphosulfate (APS) using thioredoxin as an electron donor. This chain is Adenosine 5'-phosphosulfate reductase, found in Rhizobium tropici.